The sequence spans 363 residues: Chemerin-like receptor 1 (363 aa).

Over 1–39 the chain is Extracellular; the sequence is MDFEDYNSTYEDSYTDDFDTIVALEEFSPLEGRVVRIFL. Asn7 is a glycosylation site (N-linked (GlcNAc...) asparagine). Residues 40 to 60 form a helical membrane-spanning segment; sequence VVVYSIICFLGILGNGLVIVI. Residues 61 to 71 lie on the Cytoplasmic side of the membrane; sequence ATFKMKKTVNT. Residues 72-92 traverse the membrane as a helical segment; it reads VWFLNLAVADFLFNVFLPIHI. The Extracellular segment spans residues 93–109; the sequence is AYAAMDYHWVFGTAMCK. Cys108 and Cys185 form a disulfide bridge. Residues 110–130 form a helical membrane-spanning segment; that stretch reads ISNFLLIHNMYTSVFLLTVIS. Topologically, residues 131–152 are cytoplasmic; sequence FDRCISVLLPVWSQNHRSIRLA. The helical transmembrane segment at 153–173 threads the bilayer; that stretch reads YMACVVIWVLAFFLSSPSLVF. The Extracellular segment spans residues 174 to 220; it reads RDTAHLHGKISCFNNFSLSATSSSSWPTHPQMDTVGFGRQMVVTITR. A glycan (N-linked (GlcNAc...) asparagine) is linked at Asn188. The chain crosses the membrane as a helical span at residues 221 to 241; sequence FLCGFLVPVLIISACYFTIVY. Residues 242-256 are Cytoplasmic-facing; it reads KLRRNRLAKTKKPFK. The helical transmembrane segment at 257–277 threads the bilayer; that stretch reads IIVTIIITFFLCWCPYHTLYL. Residues 278 to 283 lie on the Extracellular side of the membrane; that stretch reads LELHHR. The chain crosses the membrane as a helical span at residues 284–304; the sequence is AMPGSVFSLGVPLATAIAIAN. The Cytoplasmic segment spans residues 305–363; the sequence is SCMNPILYVFMGQDFKKFKVALFSRLVNALSEDTGHSSYPSHRSFTKMSSMNERETSML. Ser335 carries the post-translational modification Phosphoserine. The interval 337 to 363 is disordered; it reads DTGHSSYPSHRSFTKMSSMNERETSML. Thr338 is subject to Phosphothreonine. Residues 340–355 show a composition bias toward polar residues; sequence HSSYPSHRSFTKMSSM. Residues Ser345, Ser348, and Ser354 each carry the phosphoserine modification.

This sequence belongs to the chemokine-like receptor (CMKLR) family. As to expression, predominantly expressed in spleen and temperately in adipose tissue.

Its subcellular location is the cell membrane. Its function is as follows. Receptor for the chemoattractant adipokine chemerin/RARRES2 and for the omega-3 fatty acid derived molecule resolvin E1. Interaction with RARRES2 initiates activation of G proteins G(i)/G(o) and beta-arrestin pathways inducing cellular responses via second messenger pathways such as intracellular calcium mobilization, phosphorylation of MAP kinases MAPK1/MAPK3 (ERK1/2), TYRO3, MAPK14/P38MAPK and PI3K leading to multifunctional effects, like, reduction of immune responses, enhancing of adipogenesis and angionesis. Resolvin E1 down-regulates cytokine production in macrophages by reducing the activation of MAPK1/3 (ERK1/2) and NF-kappa-B. Positively regulates adipogenesis and adipocyte metabolism. The chain is Chemerin-like receptor 1 (CMLKR1) from Sus scrofa (Pig).